Reading from the N-terminus, the 174-residue chain is uncharacterized protein (174 aa).

2 helical membrane passes run 8–28 (FLFI…NYVF) and 146–166 (IVSW…IQFI).

It is found in the cell membrane. This is an uncharacterized protein from Haemophilus influenzae (strain ATCC 51907 / DSM 11121 / KW20 / Rd).